Reading from the N-terminus, the 506-residue chain is Alpha-L-arabinofuranosidase B (506 aa).

The first 26 residues, 1–26 (MSSGLSLERACAVALGIVASASLVAA), serve as a signal peptide directing secretion. Residues 27-343 (GPCDIYSSGG…ADIVAAKYAI (317 aa)) form a catalytic region. 3 disulfide bridges follow: Cys-29/Cys-39, Cys-89/Cys-94, and Cys-184/Cys-185. Asn-91 carries an N-linked (GlcNAc...) asparagine glycan. Residue Asp-227 coordinates substrate. Glu-229 acts as the Nucleophile in catalysis. Substrate is bound by residues Asn-230 and Gly-304. Asp-305 (proton donor) is an active-site residue. Residues 344–506 (ASLTSGPALT…VSWVVSTGFA (163 aa)) are ABD. Residues Cys-409 and Cys-447 are joined by a disulfide bond. Residues His-424, Asn-426, Phe-427, Asp-443, His-471, Glu-473, Leu-476, and Asp-496 each contribute to the substrate site.

This sequence belongs to the glycosyl hydrolase 54 family.

The protein resides in the secreted. It carries out the reaction Hydrolysis of terminal non-reducing alpha-L-arabinofuranoside residues in alpha-L-arabinosides.. It functions in the pathway glycan metabolism; L-arabinan degradation. Alpha-L-arabinofuranosidase involved in the degradation of arabinoxylan, a major component of plant hemicellulose. Able to hydrolyze 1,5-, 1,3- and 1,2-alpha-linkages not only in L-arabinofuranosyl oligosaccharides, but also in polysaccharides containing terminal non-reducing L-arabinofuranoses in side chains, like L-arabinan, arabinogalactan and arabinoxylan. In Aspergillus oryzae (strain ATCC 42149 / RIB 40) (Yellow koji mold), this protein is Alpha-L-arabinofuranosidase B (abfB).